A 279-amino-acid chain; its full sequence is Tryptophan 2,3-dioxygenase (279 aa).

Substrate contacts are provided by residues 48–52, Y110, and R114; that span reads FIIQH. H237 provides a ligand contact to heme. Position 251 (T251) interacts with substrate.

This sequence belongs to the tryptophan 2,3-dioxygenase family. Homotetramer. Heme is required as a cofactor.

It carries out the reaction L-tryptophan + O2 = N-formyl-L-kynurenine. The protein operates within amino-acid degradation; L-tryptophan degradation via kynurenine pathway; L-kynurenine from L-tryptophan: step 1/2. Heme-dependent dioxygenase that catalyzes the oxidative cleavage of the L-tryptophan (L-Trp) pyrrole ring and converts L-tryptophan to N-formyl-L-kynurenine. Catalyzes the oxidative cleavage of the indole moiety. The protein is Tryptophan 2,3-dioxygenase of Ruegeria sp. (strain TM1040) (Silicibacter sp.).